Consider the following 229-residue polypeptide: uncharacterized protein (229 aa).

This is an uncharacterized protein from Borreliella burgdorferi (strain ATCC 35210 / DSM 4680 / CIP 102532 / B31) (Borrelia burgdorferi).